Reading from the N-terminus, the 329-residue chain is Urease accessory protein UreD 2 (329 aa).

The tract at residues 100 to 120 (YSRPSDSSKFTNGTQSANSNT) is disordered. Positions 103 to 120 (PSDSSKFTNGTQSANSNT) are enriched in polar residues.

It belongs to the UreD family. As to quaternary structure, ureD, UreF and UreG form a complex that acts as a GTP-hydrolysis-dependent molecular chaperone, activating the urease apoprotein by helping to assemble the nickel containing metallocenter of UreC. The UreE protein probably delivers the nickel.

The protein localises to the cytoplasm. In terms of biological role, required for maturation of urease via the functional incorporation of the urease nickel metallocenter. This is Urease accessory protein UreD 2 from Psychrobacter cryohalolentis (strain ATCC BAA-1226 / DSM 17306 / VKM B-2378 / K5).